A 451-amino-acid chain; its full sequence is SH2 domain-containing protein 7 (451 aa).

The SH2 domain maps to 51–142 (WFHGFITRKQ…PFKEMLTAAC (92 aa)). Disordered regions lie at residues 180–232 (KAAS…SLLE), 256–321 (LGTE…SDAM), and 408–436 (GTPE…THKP). Residues 221-232 (SPLPEKSSSLLE) show a composition bias toward low complexity. Residues 279 to 291 (EAQRRLSDGEQNR) are compositionally biased toward basic and acidic residues. Residues 306–316 (QGPTESPTSWG) show a composition bias toward polar residues. Positions 426–436 (KSKETGRTHKP) are enriched in basic and acidic residues.

In Homo sapiens (Human), this protein is SH2 domain-containing protein 7 (SH2D7).